The chain runs to 409 residues: 4-hydroxy-3-methylbut-2-en-1-yl diphosphate synthase (ferredoxin) (409 aa).

A compositionally biased stretch (polar residues) spans 1–12; sequence MQTLDRPNAPTQ. A disordered region spans residues 1 to 22; sequence MQTLDRPNAPTQQPYPEPVYPR. [4Fe-4S] cluster contacts are provided by C314, C317, C348, and E355.

It belongs to the IspG family. [4Fe-4S] cluster is required as a cofactor.

The catalysed reaction is (2E)-4-hydroxy-3-methylbut-2-enyl diphosphate + 2 oxidized [2Fe-2S]-[ferredoxin] + H2O = 2-C-methyl-D-erythritol 2,4-cyclic diphosphate + 2 reduced [2Fe-2S]-[ferredoxin] + H(+). The protein operates within isoprenoid biosynthesis; isopentenyl diphosphate biosynthesis via DXP pathway; isopentenyl diphosphate from 1-deoxy-D-xylulose 5-phosphate: step 5/6. In terms of biological role, converts 2C-methyl-D-erythritol 2,4-cyclodiphosphate (ME-2,4cPP) into 1-hydroxy-2-methyl-2-(E)-butenyl 4-diphosphate. In Synechococcus sp. (strain JA-2-3B'a(2-13)) (Cyanobacteria bacterium Yellowstone B-Prime), this protein is 4-hydroxy-3-methylbut-2-en-1-yl diphosphate synthase (ferredoxin).